The following is a 431-amino-acid chain: Keratin, type I cytoskeletal 18 (431 aa).

Residues 2 to 83 (SLRTSYSVRS…SGSTGEIMGN (82 aa)) are head. Phosphoserine is present on Ser12. A Phosphothreonine modification is found at Thr13. Phosphoserine occurs at positions 22 and 36. The segment at 84 to 119 (EKMAMQNLNDRLASYLEKVRILEQANSKLELKIREA) is coil 1A. The region spanning 84–395 (EKMAMQNLND…RLLDGGDFKL (312 aa)) is the IF rod domain. The linker 1 stretch occupies residues 120-136 (LEKRGPDVHDYSRFQPI). Positions 137–228 (VDELRKKIFD…KNHDNEVMEL (92 aa)) are coil 1B. The tract at residues 229–252 (RNQISQSGVQVDVDAPKGQDLSQI) is linker 12. Positions 253–390 (MEEIRAKYEK…IATYRRLLDG (138 aa)) are coil 2. The tail stretch occupies residues 391–431 (GDFKLQDALEEQKKVKVMTVTQTLVDGKVVSSSTETKERKL).

This sequence belongs to the intermediate filament family. Heterotetramer of two type I and two type II keratins. Keratin-18 associates with keratin-8. Proteolytically cleaved by caspases during epithelial cell apoptosis. Expressed in simple epithelia such as intestinal mucosa, bile duct, hepatocytes, renal tubules, endothelia, ocular lens epithelium, and in a variety of mesenchymally-derived cells such as blood vessel endothelia, pillar gill cells, optic nerve glial cells, fibroblasts, interstitial cells, chondrocytes and ovarian theca cells. Also expressed in epidermis, pharyngeal mucosa, mucosa of anterior esophagus, gill mucosa and cornea.

Its function is as follows. When phosphorylated, plays a role in filament reorganization. This Danio rerio (Zebrafish) protein is Keratin, type I cytoskeletal 18.